The sequence spans 906 residues: Catenin alpha-2 (906 aa).

A compositionally biased stretch (basic and acidic residues) spans 866 to 880 (KKPLVKREKPEEYQT). The segment at 866 to 892 (KKPLVKREKPEEYQTRVRRGSQKKHIS) is disordered. The span at 881 to 891 (RVRRGSQKKHI) shows a compositional bias: basic residues.

This sequence belongs to the vinculin/alpha-catenin family. As to quaternary structure, interacts with CDH1 and CDH2. Mainly in the nervous system (at protein level).

Its subcellular location is the cell membrane. It localises to the cytoplasm. The protein resides in the cytoskeleton. The protein localises to the cell junction. It is found in the adherens junction. Its subcellular location is the cell projection. It localises to the axon. The protein resides in the nucleus. May function as a linker between cadherin adhesion receptors and the cytoskeleton to regulate cell-cell adhesion and differentiation in the nervous system. The protein is Catenin alpha-2 (CTNNA2) of Gallus gallus (Chicken).